The following is a 293-amino-acid chain: 4-hydroxy-tetrahydrodipicolinate synthase (293 aa).

Position 45 (T45) interacts with pyruvate. The active-site Proton donor/acceptor is the Y133. Residue K161 is the Schiff-base intermediate with substrate of the active site. Pyruvate is bound at residue I203.

Belongs to the DapA family. As to quaternary structure, homotetramer; dimer of dimers.

It localises to the cytoplasm. It catalyses the reaction L-aspartate 4-semialdehyde + pyruvate = (2S,4S)-4-hydroxy-2,3,4,5-tetrahydrodipicolinate + H2O + H(+). Its pathway is amino-acid biosynthesis; L-lysine biosynthesis via DAP pathway; (S)-tetrahydrodipicolinate from L-aspartate: step 3/4. Catalyzes the condensation of (S)-aspartate-beta-semialdehyde [(S)-ASA] and pyruvate to 4-hydroxy-tetrahydrodipicolinate (HTPA). The chain is 4-hydroxy-tetrahydrodipicolinate synthase from Syntrophotalea carbinolica (strain DSM 2380 / NBRC 103641 / GraBd1) (Pelobacter carbinolicus).